The primary structure comprises 193 residues: Holliday junction branch migration complex subunit RuvA (193 aa).

The domain I stretch occupies residues 1 to 63 (MIHHLKGQLI…EDSHTLYGFA (63 aa)). The segment at 64–142 (EKSEREIFRL…KVLGDDEVFV (79 aa)) is domain II. The segment at 143–145 (SQS) is flexible linker. The segment at 145 to 193 (SNTNKEEALSALEILGYNRRQAGKVVEKILKEDPESTVESIIKMALKKL) is domain III.

This sequence belongs to the RuvA family. Homotetramer. Forms an RuvA(8)-RuvB(12)-Holliday junction (HJ) complex. HJ DNA is sandwiched between 2 RuvA tetramers; dsDNA enters through RuvA and exits via RuvB. An RuvB hexamer assembles on each DNA strand where it exits the tetramer. Each RuvB hexamer is contacted by two RuvA subunits (via domain III) on 2 adjacent RuvB subunits; this complex drives branch migration. In the full resolvosome a probable DNA-RuvA(4)-RuvB(12)-RuvC(2) complex forms which resolves the HJ.

It localises to the cytoplasm. In terms of biological role, the RuvA-RuvB-RuvC complex processes Holliday junction (HJ) DNA during genetic recombination and DNA repair, while the RuvA-RuvB complex plays an important role in the rescue of blocked DNA replication forks via replication fork reversal (RFR). RuvA specifically binds to HJ cruciform DNA, conferring on it an open structure. The RuvB hexamer acts as an ATP-dependent pump, pulling dsDNA into and through the RuvAB complex. HJ branch migration allows RuvC to scan DNA until it finds its consensus sequence, where it cleaves and resolves the cruciform DNA. The protein is Holliday junction branch migration complex subunit RuvA of Christiangramia forsetii (strain DSM 17595 / CGMCC 1.15422 / KT0803) (Gramella forsetii).